The chain runs to 514 residues: Cilia- and flagella-associated protein 53 (514 aa).

Residues 207–429 (EDRLAKERRE…ERINEGLKEL (223 aa)) are a coiled coil.

The protein belongs to the CFAP53 family. As to quaternary structure, microtubule inner protein component of sperm flagellar doublet microtubules. Interacts with PIERCE1 and PIERCE2; the interactions link outer dynein arms docking complex (ODA-DC) to the internal microtubule inner proteins (MIP) in cilium axoneme. Interacts with CCDC38. Interacts with CCDC42 and IFT88. Interacts with centriolar satellite proteins PIBF1/CEP90 and PCM1. Interacts with dyneins DNAIC1, DNAIC2 AND DNAH11 and with ODA-DC component ODAD4/TTC25. As to expression, expressed in trachea multiciliated cells.

The protein localises to the cytoplasm. Its subcellular location is the cytoskeleton. It localises to the cilium axoneme. It is found in the flagellum axoneme. The protein resides in the microtubule organizing center. The protein localises to the centrosome. Its subcellular location is the centriolar satellite. It localises to the spindle pole. Its function is as follows. Microtubule inner protein (MIP) part of the dynein-decorated doublet microtubules (DMTs) in cilia axoneme, which is required for motile cilia beating. Regulates motility patterns of both 9+0 and 9+2 motile cilia through differential localization and recruitment of axonemal dynein components. Required for centriolar satellite integrity and non-motile cilium assembly. Required for motile cilium formation. Through its role in beating of primary cilia, involved in the establishment of organ laterality during embryogenesis. Required for sperm flagellum biogenesis and is essential for male fertility. The sequence is that of Cilia- and flagella-associated protein 53 (CFAP53) from Bos taurus (Bovine).